Consider the following 101-residue polypeptide: Small ribosomal subunit protein uS17 (101 aa).

This sequence belongs to the universal ribosomal protein uS17 family. As to quaternary structure, part of the 30S ribosomal subunit.

In terms of biological role, one of the primary rRNA binding proteins, it binds specifically to the 5'-end of 16S ribosomal RNA. The polypeptide is Small ribosomal subunit protein uS17 (Leifsonia xyli subsp. xyli (strain CTCB07)).